A 92-amino-acid polypeptide reads, in one-letter code: Putative phosphotransferase enzyme IIB component BB_0367 (92 aa).

In terms of domain architecture, PTS EIIB type-1 spans 10–92 (IKVAEHIVEC…ILYMMNEQKQ (83 aa)).

Its subcellular location is the cytoplasm. The phosphoenolpyruvate-dependent sugar phosphotransferase system (PTS), a major carbohydrate active -transport system, catalyzes the phosphorylation of incoming sugar substrates concomitant with their translocation across the cell membrane. The sequence is that of Putative phosphotransferase enzyme IIB component BB_0367 from Borreliella burgdorferi (strain ATCC 35210 / DSM 4680 / CIP 102532 / B31) (Borrelia burgdorferi).